Consider the following 115-residue polypeptide: Holo-[acyl-carrier-protein] synthase (115 aa).

The Mg(2+) site is built by Asp8 and Glu56.

Belongs to the P-Pant transferase superfamily. AcpS family. Mg(2+) serves as cofactor.

It is found in the cytoplasm. It catalyses the reaction apo-[ACP] + CoA = holo-[ACP] + adenosine 3',5'-bisphosphate + H(+). Its function is as follows. Transfers the 4'-phosphopantetheine moiety from coenzyme A to a Ser of acyl-carrier-protein. The sequence is that of Holo-[acyl-carrier-protein] synthase from Ureaplasma parvum serovar 3 (strain ATCC 27815 / 27 / NCTC 11736).